Consider the following 205-residue polypeptide: Thymidine kinase (205 aa).

Residues 9-16 (SAMNAGKS) and 87-90 (DESQ) each bind ATP. Glutamate 88 serves as the catalytic Proton acceptor. 4 residues coordinate Zn(2+): cysteine 145, cysteine 147, cysteine 182, and histidine 185.

It belongs to the thymidine kinase family. In terms of assembly, homotetramer.

It is found in the cytoplasm. It catalyses the reaction thymidine + ATP = dTMP + ADP + H(+). The sequence is that of Thymidine kinase from Salmonella choleraesuis (strain SC-B67).